Consider the following 36-residue polypeptide: Collagen alpha-2(I) chain (36 aa).

The disordered stretch occupies residues 1–36 (GSNGEPGSAGPPGPAGLRGLPGESGAVGPAGPPGSR). Proline 6 and proline 12 each carry 4-hydroxyproline. The segment covering 15-29 (AGLRGLPGESGAVGP) has biased composition (low complexity). 4-hydroxyproline is present on proline 33.

This sequence belongs to the fibrillar collagen family. Trimers of one alpha 2(I) and two alpha 1(I) chains. Post-translationally, proline residues at the third position of the tripeptide repeating unit (G-X-Y) are hydroxylated in some or all of the chains.

Its subcellular location is the secreted. The protein localises to the extracellular space. It localises to the extracellular matrix. Functionally, type I collagen is a member of group I collagen (fibrillar forming collagen). This is Collagen alpha-2(I) chain from Brachylophosaurus canadensis (Campanian hadrosaur).